Consider the following 376-residue polypeptide: Actin-related protein T1 (376 aa).

This sequence belongs to the actin family. In terms of tissue distribution, in skin, expressed in the basal, spinous and granular layers of the epidermis. Also expressed in hair follicles, sebaceaous glands, eccrine sweat glands and semen.

It localises to the cytoplasm. It is found in the cytoskeleton. Its subcellular location is the nucleus. The protein localises to the cytoplasmic vesicle. The protein resides in the secretory vesicle. It localises to the acrosome. Functionally, negatively regulates the Hedgehog (SHH) signaling. Binds to the promoter of the SHH signaling mediator, GLI1, and inhibits its expression. In Homo sapiens (Human), this protein is Actin-related protein T1.